Here is a 360-residue protein sequence, read N- to C-terminus: Protein phosphatase methylesterase 1 (360 aa).

A disordered region spans residues 26 to 50; that stretch reads DEDDIPEPAVMPPTGNSSSTANTED. Active-site residues include serine 167, aspartate 192, and histidine 316.

The protein belongs to the AB hydrolase superfamily.

The enzyme catalyses [phosphatase 2A protein]-C-terminal L-leucine methyl ester + H2O = [phosphatase 2A protein]-C-terminal L-leucine + methanol + H(+). Demethylates proteins that have been reversibly carboxymethylated. Demethylates the phosphatase PP2A catalytic subunit. Involved in the regulation of filamentous growth. This Candida albicans (strain SC5314 / ATCC MYA-2876) (Yeast) protein is Protein phosphatase methylesterase 1 (PPE1).